A 1708-amino-acid chain; its full sequence is Clathrin heavy chain 1 (1708 aa).

The tract at residues 1–492 is globular terminal domain; it reads MAAANAPIAM…VDNDLALKIY (492 aa). WD40-like repeat stretches follow at residues 25–67, 68–113, 114–155, 156–205, 206–270, 271–314, and 315–343; these read FVTF…RPIT, ADSA…MPEQ, VVFW…ANLA, NNQI…QALE, AHAA…PDFQ, DDFP…ISPD, and PIFLTAESSASGGFYAINRRGQVLHATVN. The binding site for the uncoating ATPase, involved in lattice disassembly stretch occupies residues 462–478; that stretch reads ENWLAEDKLECSEELGD. Residues 493–536 are flexible linker; the sequence is IKARATPKVVAAFAERREFDKILIYSKQVGYTPDYLFLLQTILR. A distal segment region spans residues 537 to 648; sequence TDPQGAVNFA…RALQHYTELP (112 aa). The interval 537–1708 is heavy chain arm; sequence TDPQGAVNFA…AYGMPPMGSY (1172 aa). 7 CHCR repeats span residues 551–697, 700–842, 847–986, 993–1138, 1142–1283, 1288–1434, and 1437–1580; these read QMEG…QIVV, AKEY…PEDF, ILSV…QLID, LPES…VSEA, FIRA…FRLA, LNII…DLIN, and LNVL…KECF. The proximal segment stretch occupies residues 653-1708; sequence VMVNTHAIEP…AYGMPPMGSY (1056 aa). The segment at 1227 to 1536 is involved in binding clathrin light chain; sequence AAKIIYAFIS…YIYKKAGRWK (310 aa). Residues 1564 to 1708 are trimerization; sequence SEDLLVYFIE…AYGMPPMGSY (145 aa).

It belongs to the clathrin heavy chain family. Clathrin triskelions, composed of 3 heavy chains and 3 light chains, are the basic subunits of the clathrin coat.

The protein localises to the cytoplasmic vesicle membrane. It is found in the membrane. The protein resides in the coated pit. Clathrin is the major protein of the polyhedral coat of coated pits and vesicles. The chain is Clathrin heavy chain 1 from Oryza sativa subsp. japonica (Rice).